The sequence spans 206 residues: Small ribosomal subunit protein uS4 (206 aa).

The S4 RNA-binding domain occupies 96–158 (SRLDNVVYRM…AKKQLRIQNA (63 aa)).

It belongs to the universal ribosomal protein uS4 family. As to quaternary structure, part of the 30S ribosomal subunit. Contacts protein S5. The interaction surface between S4 and S5 is involved in control of translational fidelity.

In terms of biological role, one of the primary rRNA binding proteins, it binds directly to 16S rRNA where it nucleates assembly of the body of the 30S subunit. Its function is as follows. With S5 and S12 plays an important role in translational accuracy. The chain is Small ribosomal subunit protein uS4 from Francisella tularensis subsp. tularensis (strain FSC 198).